The chain runs to 555 residues: Luciferin 2-monooxygenase (555 aa).

An N-terminal signal peptide occupies residues 1–11 (MKIIILSVILA). VWFD domains are found at residues 80 to 266 (IECR…EYCK) and 319 to 494 (GTCV…RLCN). Intrachain disulfides connect Cys-82–Cys-222, Cys-321–Cys-454, Cys-343–Cys-493, and Cys-352–Cys-451. N-linked (GlcNAc...) asparagine glycans are attached at residues Asn-186 and Asn-408.

Post-translationally, the cysteine residues presumably exist in intramolecular disulfide bridges. In terms of processing, the N-terminus is blocked.

It carries out the reaction Cypridina luciferin + O2 = oxidized Cypridina luciferin + hnu + CO2. This is Luciferin 2-monooxygenase from Vargula hilgendorfii (Sea firefly).